The primary structure comprises 429 residues: Hemoglobinase (429 aa).

The N-terminal stretch at Met-1–Cys-19 is a signal peptide. Residues Gln-20–Thr-31 constitute a propeptide that is removed on maturation. Residue His-151 is part of the active site. Residues Phe-288 to Ser-309 are disordered. The propeptide occupies Arg-292 to Gly-429.

This sequence belongs to the peptidase C13 family.

It catalyses the reaction Hydrolysis of proteins and small molecule substrates at -Asn-|-Xaa- bonds.. Functionally, this protease is used by the parasite for degradation of the host globin. This Schistosoma mansoni (Blood fluke) protein is Hemoglobinase.